The primary structure comprises 437 residues: La-related protein 7 homolog (437 aa).

One can recognise an HTH La-type RNA-binding domain in the interval 38-145 (SKSPSLTIPK…KRKKKFDNRT (108 aa)). The xRRM domain maps to 279–397 (ELSQSCFLKI…QRSSIDEIKA (119 aa)). Residues 417-427 (RRPVSKRKNKA) are compositionally biased toward basic residues. The interval 417 to 437 (RRPVSKRKNKAINKMSTEVKK) is disordered.

Belongs to the LARP7 family. As to quaternary structure, component of the telomerase holoenzyme complex composed minimally of the catalytic subunit p123 and the telomerase RNA template component. Post-translationally, the mature form of the protein is a protein of 43 kDa, which is derived from a 51 kDa precursor by proteolytic cleavage.

It localises to the nucleus. The protein localises to the chromosome. It is found in the telomere. Its function is as follows. RNA-binding protein required for assembly of the holoenzyme telomerase ribonucleoprotein (RNP) complex. Specifically binds telomerase RNA and promotes its assembly with catalytic subunit p123, thereby stimulating enzymatic activity and processivity of p123. Telomerase is a ribonucleoprotein enzyme essential that copies new telomeric repeats onto chromosome ends and functions to maintain cell division. The polypeptide is La-related protein 7 homolog (Euplotes aediculatus (Ciliate)).